A 246-amino-acid chain; its full sequence is Probable septum site-determining protein MinC (246 aa).

Belongs to the MinC family. As to quaternary structure, interacts with MinD and FtsZ.

Its function is as follows. Cell division inhibitor that blocks the formation of polar Z ring septums. Rapidly oscillates between the poles of the cell to destabilize FtsZ filaments that have formed before they mature into polar Z rings. Prevents FtsZ polymerization. This chain is Probable septum site-determining protein MinC, found in Pseudomonas syringae pv. syringae (strain B728a).